The primary structure comprises 127 residues: Glycine cleavage system H protein (127 aa).

The region spanning 24-105 (TLTVGVTDHA…AYAAWLFKLK (82 aa)) is the Lipoyl-binding domain. Position 65 is an N6-lipoyllysine (K65).

The protein belongs to the GcvH family. The glycine cleavage system is composed of four proteins: P, T, L and H. (R)-lipoate is required as a cofactor.

In terms of biological role, the glycine cleavage system catalyzes the degradation of glycine. The H protein shuttles the methylamine group of glycine from the P protein to the T protein. This Azoarcus sp. (strain BH72) protein is Glycine cleavage system H protein.